We begin with the raw amino-acid sequence, 537 residues long: CTP synthase (537 aa).

Residues 1–268 (MPFKCIFLTG…STFITEKLGL (268 aa)) form an amidoligase domain region. Residue serine 14 participates in CTP binding. Serine 14 is a binding site for UTP. 15–20 (SLGKGL) contacts ATP. Tyrosine 55 provides a ligand contact to L-glutamine. Aspartate 72 is an ATP binding site. Mg(2+) contacts are provided by aspartate 72 and glutamate 142. Residues 149-151 (DIE), 188-193 (KTKPTQ), and lysine 224 each bind CTP. UTP is bound by residues 188–193 (KTKPTQ) and lysine 224. Residues 294-533 (RIGLVGKYVQ…IQAALLYSKN (240 aa)) form the Glutamine amidotransferase type-1 domain. Glycine 353 contributes to the L-glutamine binding site. The active-site Nucleophile; for glutamine hydrolysis is the cysteine 380. Residues 381 to 384 (LGMQ), glutamate 404, and arginine 461 contribute to the L-glutamine site. Catalysis depends on residues histidine 506 and glutamate 508.

This sequence belongs to the CTP synthase family. In terms of assembly, homotetramer.

It catalyses the reaction UTP + L-glutamine + ATP + H2O = CTP + L-glutamate + ADP + phosphate + 2 H(+). It carries out the reaction L-glutamine + H2O = L-glutamate + NH4(+). The enzyme catalyses UTP + NH4(+) + ATP = CTP + ADP + phosphate + 2 H(+). It functions in the pathway pyrimidine metabolism; CTP biosynthesis via de novo pathway; CTP from UDP: step 2/2. Its activity is regulated as follows. Allosterically activated by GTP, when glutamine is the substrate; GTP has no effect on the reaction when ammonia is the substrate. The allosteric effector GTP functions by stabilizing the protein conformation that binds the tetrahedral intermediate(s) formed during glutamine hydrolysis. Inhibited by the product CTP, via allosteric rather than competitive inhibition. Its function is as follows. Catalyzes the ATP-dependent amination of UTP to CTP with either L-glutamine or ammonia as the source of nitrogen. Regulates intracellular CTP levels through interactions with the four ribonucleotide triphosphates. This chain is CTP synthase, found in Chlamydia caviae (strain ATCC VR-813 / DSM 19441 / 03DC25 / GPIC) (Chlamydophila caviae).